Consider the following 238-residue polypeptide: UPF0758 protein Dtpsy_2777 (238 aa).

The MPN domain maps to 116–238 (VFDSPQAVQH…ALSMAEQGLV (123 aa)). Zn(2+) is bound by residues His187, His189, and Asp200. A JAMM motif motif is present at residues 187 to 200 (HNHPSGSVQPSRAD).

It belongs to the UPF0758 family.

The protein is UPF0758 protein Dtpsy_2777 of Acidovorax ebreus (strain TPSY) (Diaphorobacter sp. (strain TPSY)).